Consider the following 855-residue polypeptide: Cell surface glycoprotein (855 aa).

Positions 1-22 (MTANKQVRAVLLAALMVFSVFA) are cleaved as a signal peptide. N-linked (GlcNAc...) asparagine glycans are attached at residues Asn78, Asn83, Asn108, Asn167, Asn174, Asn187, Asn203, Asn227, Asn230, Asn313, Asn363, Asn441, Asn548, Asn588, Asn608, Asn620, Asn642, Asn656, and Asn754. The span at 782–802 (ETTTAAETTTTEESTETTTTE) shows a compositional bias: low complexity. A disordered region spans residues 782-831 (ETTTAAETTTTEESTETTTTEESTEEPTETATATEEPTEEATEETTESST). Positions 817–827 (EPTEEATEETT) are enriched in acidic residues. The helical transmembrane segment at 831–851 (TPGFGVVVALVALVAAALLAV) threads the bilayer. The PGF sorting signal signature appears at 832–834 (PGF).

The protein belongs to the halobacterial S-layer protein family. Glycosylated. In terms of processing, cleaved by the archaeosortase ArtA at the C-terminus, with removal of a short hydrophobic segment. Post-translationally, lipidation.

It localises to the secreted. It is found in the cell wall. The protein resides in the S-layer. The protein localises to the cell membrane. S-layer protein. The S-layer is a paracrystalline mono-layered assembly of proteins which coats the surface of the cell. This Haloferax gibbonsii protein is Cell surface glycoprotein.